We begin with the raw amino-acid sequence, 663 residues long: MNIEQRVTELHQLLHQYNYEYHVQDNPSVPDSEYDKLLHELIDIEREHPELKTDDSPTVRVGGTPVSAFEKVDHDTPMLSLGNAFSEEDLLAFDKRVKDEVGEVEYMVELKIDGLAVSLKYVDGVFVQGLTRGDGTTGENITQNLKTIHAIPLTLSVPLTFEVRGEAYMPRKSFLALNAYREKVGEPLAANPRNAAAGSLRQLDSKLTAKRKLDIFLYSVNDLRELNAQSQSEALDKLDEIGFKTNHERKLCRNMEEVFEYIKYWTEKRNDLAYDIDGIVIKVNDLSKQDELGFTAKSPKWAIAYKFPAEEVITTLNDIELSIGRTGVVTPTAILEPVKVAGTTVGRASLHNEDLIREKDIRIGDSVVIRKAGEIIPEVVRVVLDRRPEGTKPYNMPEICPSCGHELVRIEGEVALRCINPKCDAKLVEGVIHFVSRTAMNIDGLGERIVEVLYNEDIINDVADLYTLERERLLTLERMGEKKVDKLLAAIEASKTNSLERLLFGLGIRHLGAKASMVLAREFGTMDNLKNATVETLTQIDDIGEKMAQSLVTYLQNEDIINLLEKLEQYGVNMRYTGVTKDDIELHPVFGEKTIVLTGKLTIMSRSEATKALTNLGAKVTNSVTKKTDIVIAGSDAGSKREKADSLGIPVWTEQMMVDALRN.

Residues 31–35, 80–81, and Glu-109 contribute to the NAD(+) site; these read DSEYD and SL. The N6-AMP-lysine intermediate role is filled by Lys-111. Arg-132, Glu-166, Lys-282, and Lys-306 together coordinate NAD(+). Positions 400, 403, 418, and 423 each coordinate Zn(2+). The 79-residue stretch at 585-663 folds into the BRCT domain; it reads ELHPVFGEKT…EQMMVDALRN (79 aa).

This sequence belongs to the NAD-dependent DNA ligase family. LigA subfamily. Mg(2+) is required as a cofactor. Mn(2+) serves as cofactor.

The enzyme catalyses NAD(+) + (deoxyribonucleotide)n-3'-hydroxyl + 5'-phospho-(deoxyribonucleotide)m = (deoxyribonucleotide)n+m + AMP + beta-nicotinamide D-nucleotide.. Its function is as follows. DNA ligase that catalyzes the formation of phosphodiester linkages between 5'-phosphoryl and 3'-hydroxyl groups in double-stranded DNA using NAD as a coenzyme and as the energy source for the reaction. It is essential for DNA replication and repair of damaged DNA. In Macrococcus caseolyticus (strain JCSC5402) (Macrococcoides caseolyticum), this protein is DNA ligase.